The following is a 296-amino-acid chain: tRNA dimethylallyltransferase (296 aa).

Residue 2-9 coordinates ATP; it reads GPTASGKT. 4–9 lines the substrate pocket; sequence TASGKT. Interaction with substrate tRNA stretches follow at residues 27-30, 151-155, and 232-237; these read DSAL, QRLSR, and RCVGYR.

The protein belongs to the IPP transferase family. As to quaternary structure, monomer. It depends on Mg(2+) as a cofactor.

The enzyme catalyses adenosine(37) in tRNA + dimethylallyl diphosphate = N(6)-dimethylallyladenosine(37) in tRNA + diphosphate. Functionally, catalyzes the transfer of a dimethylallyl group onto the adenine at position 37 in tRNAs that read codons beginning with uridine, leading to the formation of N6-(dimethylallyl)adenosine (i(6)A). The chain is tRNA dimethylallyltransferase from Shewanella sp. (strain ANA-3).